A 579-amino-acid chain; its full sequence is Thiol:disulfide interchange protein DsbD (579 aa).

Residues M1–A16 form the signal peptide. 2 disulfides stabilise this stretch: C124-C129 and C193-C315. A run of 8 helical transmembrane segments spans residues I178–L198, L230–L250, Y254–F274, G296–T316, A337–F357, F376–W396, E397–S417, and G420–L440. In terms of domain architecture, Thioredoxin spans T449–H579. A disulfide bridge connects residues C495 and C498.

The protein belongs to the thioredoxin family. DsbD subfamily.

It localises to the cell inner membrane. The enzyme catalyses [protein]-dithiol + NAD(+) = [protein]-disulfide + NADH + H(+). The catalysed reaction is [protein]-dithiol + NADP(+) = [protein]-disulfide + NADPH + H(+). Functionally, required to facilitate the formation of correct disulfide bonds in some periplasmic proteins and for the assembly of the periplasmic c-type cytochromes. Acts by transferring electrons from cytoplasmic thioredoxin to the periplasm. This transfer involves a cascade of disulfide bond formation and reduction steps. This Haemophilus influenzae (strain 86-028NP) protein is Thiol:disulfide interchange protein DsbD.